Here is a 1017-residue protein sequence, read N- to C-terminus: EMILIN-1 (1017 aa).

The first 21 residues, 1-21 (MAPRALWSCYLCCLLTIATEA), serve as a signal peptide directing secretion. Residues 56–133 (HRNWCAYVVT…QGYGGDDCGE (78 aa)) form the EMI domain. 3 disulfide bridges follow: Cys60-Cys123, Cys87-Cys94, and Cys122-Cys131. 2 disordered regions span residues 134 to 180 (GPAS…SEKV) and 259 to 289 (ELGHLNNHHNGGPGGGGRASGPVPVPSGPSE). A compositionally biased stretch (low complexity) spans 154-167 (RPNLSGSSAGSHLS). N-linked (GlcNAc...) asparagine glycosylation occurs at Asn156. Coiled coils occupy residues 171–211 (GEGP…LAED), 237–266 (ETLSEIQQQLQLLDNRVSTHDQELGHLNNH), and 310–374 (LDGF…DVVT). A disordered region spans residues 383 to 403 (RRGSELGGAAGQGGHPPGYTS). The span at 387–398 (ELGGAAGQGGHP) shows a compositional bias: gly residues. N-linked (GlcNAc...) asparagine glycans are attached at residues Asn416, Asn456, Asn562, and Asn659. A coiled-coil region spans residues 519–573 (LHEAEAAGEAQQAVLEGLQGLLSRLRERMDAQEETAAEILLRLNLTAAQLSQLEG). Residues 676 to 697 (LADLGATKDSIISEINRLQQEA) are a coiled coil. Asn767 and Asn795 each carry an N-linked (GlcNAc...) asparagine glycan. Residues 789–809 (RRLGALNNSLLLLEDRLQQLS) adopt a coiled-coil conformation. Residues 811–820 (KDFTGPSGKA) show a composition bias toward low complexity. The interval 811–866 (KDFTGPSGKAGPPGPPGLQGPSGPAGPPGPPGKDGQQGAIGPPGPQGEQGAEGAPA) is disordered. A Collagen-like domain is found at 815 to 865 (GPSGKAGPPGPPGLQGPSGPAGPPGPPGKDGQQGAIGPPGPQGEQGAEGAP). Over residues 822-841 (PPGPPGLQGPSGPAGPPGPP) the composition is skewed to pro residues. Low complexity predominate over residues 843–866 (KDGQQGAIGPPGPQGEQGAEGAPA). One can recognise a C1q domain in the interval 867–1014 (APVPRVAFSA…GALLYEDTEL (148 aa)).

As to quaternary structure, homotrimer associated through a moderately stable interaction of the C-terminal globular C1q domains, allowing the nucleation of the triple helix and then a further quaternary assembly to higher-order polymers via intermolecular disulfide bonds. Interacts with EMILIN2. Interacts with EFEMP2; this interaction promotes the incorporation of EFEMP2 into the extracellular matrix.

The protein resides in the secreted. Its subcellular location is the extracellular space. It is found in the extracellular matrix. In terms of biological role, involved in elastic and collagen fibers formation. It is required for EFEMP2 deposition into the extracellular matrix, and collagen network assembly and cross-linking via protein-lysine 6-oxidase/LOX activity. May be responsible for anchoring smooth muscle cells to elastic fibers, and may be involved the processes that regulate vessel assembly. Has cell adhesive capacity. May have a function in placenta formation and initial organogenesis and a later role in interstitial connective tissue. This Mus musculus (Mouse) protein is EMILIN-1 (Emilin1).